Consider the following 291-residue polypeptide: ATP synthase gamma chain (291 aa).

The protein belongs to the ATPase gamma chain family. F-type ATPases have 2 components, CF(1) - the catalytic core - and CF(0) - the membrane proton channel. CF(1) has five subunits: alpha(3), beta(3), gamma(1), delta(1), epsilon(1). CF(0) has three main subunits: a, b and c.

Its subcellular location is the cell inner membrane. Produces ATP from ADP in the presence of a proton gradient across the membrane. The gamma chain is believed to be important in regulating ATPase activity and the flow of protons through the CF(0) complex. This chain is ATP synthase gamma chain, found in Sulfurihydrogenibium sp. (strain YO3AOP1).